A 197-amino-acid polypeptide reads, in one-letter code: Class A basic helix-loop-helix protein 15 (197 aa).

Positions 1–12 (MKTKNRPPRRRT) are enriched in basic residues. Disordered stretches follow at residues 1-82 (MKTK…ERER) and 178-197 (QPQGHLQRYSTQIHSFREGS). Threonine 12 and threonine 25 each carry phosphothreonine. The segment covering 65–82 (GRRENSVQRRLESNERER) has biased composition (basic and acidic residues). One can recognise a bHLH domain in the interval 72–124 (QRRLESNERERQRMHKLNNAFQALREVIPHVRADKKLSKIETLTLAKNYIKSL).

In terms of assembly, forms homodimers or heterodimers with TCF3 gene products E12 and E47. These dimers bind to the E-box site, however, heterodimer with MYOD1 does not bind target DNA. As to expression, expressed in pancreatic tissue only in acinar cells. There is a complete absence of expression in intra- or interlobular pancreatic ducts and in all islet cells.

Its subcellular location is the nucleus. In terms of biological role, plays a role in controlling the transcriptional activity of MyoD, ensuring that expanding myoblast populations remain undifferentiated. Repression may occur through muscle-specific E-box occupancy by homodimers. May also negatively regulate bHLH-mediated transcription through an N-terminal repressor domain. Serves as a key regulator of acinar cell function, stability, and identity. Also required for normal organelle localization in exocrine cells and for mitochondrial calcium ion transport. May function as a unique regulator of gene expression in several different embryonic and postnatal cell lineages. Binds to the E-box consensus sequence 5'-CANNTG-3'. The polypeptide is Class A basic helix-loop-helix protein 15 (Bhlha15) (Mus musculus (Mouse)).